The primary structure comprises 167 residues: NADH-ubiquinone oxidoreductase chain 6 (167 aa).

The next 4 membrane-spanning stretches (helical) occupy residues P24 to A44, L54 to L74, V85 to L105, and W135 to I155.

This sequence belongs to the complex I subunit 6 family.

It localises to the mitochondrion membrane. The enzyme catalyses a ubiquinone + NADH + 5 H(+)(in) = a ubiquinol + NAD(+) + 4 H(+)(out). In terms of biological role, core subunit of the mitochondrial membrane respiratory chain NADH dehydrogenase (Complex I) that is believed to belong to the minimal assembly required for catalysis. Complex I functions in the transfer of electrons from NADH to the respiratory chain. The immediate electron acceptor for the enzyme is believed to be ubiquinone. The protein is NADH-ubiquinone oxidoreductase chain 6 (MT-ND6) of Myxine glutinosa (Atlantic hagfish).